The sequence spans 350 residues: Ornithine cyclodeaminase (350 aa).

L-ornithine contacts are provided by R45 and K69. Residues T84, R112, A139–Q140, D161, T202, V225–D228, K232, and S293 contribute to the NAD(+) site. An L-ornithine-binding site is contributed by R112. D228 serves as a coordination point for L-ornithine. The active-site Proton donor/acceptor is D228. Residue V294 coordinates L-ornithine. K331 contributes to the NAD(+) binding site.

It belongs to the ornithine cyclodeaminase/mu-crystallin family. Homodimer. It depends on NAD(+) as a cofactor.

It catalyses the reaction L-ornithine = L-proline + NH4(+). The protein operates within amino-acid biosynthesis; L-proline biosynthesis; L-proline from L-ornithine: step 1/1. Catalyzes the conversion of L-ornithine into L-proline with release of ammonia. Is likely involved in the L-ornithine degradation pathway that allows P.putida to utilize this compound as sole carbon and nitrogen source. In Pseudomonas putida (strain ATCC 47054 / DSM 6125 / CFBP 8728 / NCIMB 11950 / KT2440), this protein is Ornithine cyclodeaminase.